Here is a 369-residue protein sequence, read N- to C-terminus: Ferredoxin--NADP reductase, chloroplastic (369 aa).

Residues 1 to 55 constitute a chloroplast transit peptide; sequence MTTAVTAAVSFPSTKTTSLSARSSSVISPDKISYKKVPLYYRNVSATGKMGPIRA. Positions 90–212 constitute an FAD-binding FR-type domain; sequence KTPYVGRCLL…TGPVGKEMLM (123 aa). FAD is bound by residues 148-151, 169-171, Y175, 186-188, and T227; these read RLYS, CVK, and VCS. Positions 151 and 171 each coordinate NADP(+). NADP(+) contacts are provided by residues T227, 259 to 260, 289 to 290, 299 to 301, 328 to 329, and E367; these read VP, SR, KMY, and GL.

The protein belongs to the ferredoxin--NADP reductase type 1 family. It depends on FAD as a cofactor.

The protein resides in the plastid. The protein localises to the chloroplast stroma. It is found in the chloroplast thylakoid membrane. The enzyme catalyses 2 reduced [2Fe-2S]-[ferredoxin] + NADP(+) + H(+) = 2 oxidized [2Fe-2S]-[ferredoxin] + NADPH. The protein operates within energy metabolism; photosynthesis. May play a key role in regulating the relative amounts of cyclic and non-cyclic electron flow to meet the demands of the plant for ATP and reducing power. This is Ferredoxin--NADP reductase, chloroplastic (PETH) from Spinacia oleracea (Spinach).